The primary structure comprises 330 residues: Stimulated by retinoic acid gene 8 protein homolog (330 aa).

The short motif at 50-55 (RVARRR) is the Nuclear localization signal (NLS) element. Positions 88–112 (QVLNKAKSHIPELEQTLDNLLKLKA) form a coiled coil.

In terms of assembly, interacts with XPO1. Interacts with MEIOSIN. Phosphorylated. Expressed specifically in testis and fetal ovaries.

It localises to the cytoplasm. The protein resides in the nucleus. Functionally, meiosis-inducer required for the transition into meiosis for both female and male germ cells. In female germ cells, acts downstream of ZGLP1 as a key effector of the meiotic program: required for premeiotic DNA replication and subsequent events in meiotic prophase. During spermatogenesis, next to its role in meiotic initiation, promotes (but is not required for) spermatogonial differentiation. In complex with MEIOSIN, directly activates the transcription of a subset of critical meiotic genes playing a central role in cell-cycle switching from mitosis to meiosis. This chain is Stimulated by retinoic acid gene 8 protein homolog, found in Homo sapiens (Human).